Reading from the N-terminus, the 322-residue chain is MKNLYTQLEQDNVPKTLTLLLQSIVGACTEIATRINHGALSDVLGSLPDHNVQGEVQKKLDVIANNILIESLKKNKQVRAVASEEVEDIILCNSFGKYLICFDPLDGSSNTDVNGSLGTIFSITSASAAQTEVSEEDFFSTGRSIIAAGYVLYGPSLMLALSTGSGTHIYTLDPSNNNFMLTHPNLNIPEDTNEFSFNLSNQFKWPENVQKYIVDLQLGTDGIRKKNFNMRWLGAMVGDMHRILCKGGIFGYPEEKNFKYGKLRLLYEANPIAFLVEQANGLASNGTTSILDTVPSSIHQRIPVFIGSKNEVLLIEKYALGK.

Glutamate 84, aspartate 103, leucine 105, and aspartate 106 together coordinate Mg(2+). Substrate is bound by residues 106-109 (DGSS), asparagine 198, and lysine 262. A Mg(2+)-binding site is contributed by glutamate 268.

This sequence belongs to the FBPase class 1 family. In terms of assembly, homotetramer. Mg(2+) serves as cofactor.

It localises to the cytoplasm. It carries out the reaction beta-D-fructose 1,6-bisphosphate + H2O = beta-D-fructose 6-phosphate + phosphate. It functions in the pathway carbohydrate biosynthesis; gluconeogenesis. This chain is Fructose-1,6-bisphosphatase class 1 3, found in Pseudoalteromonas translucida (strain TAC 125).